The primary structure comprises 804 residues: Phenylalanine--tRNA ligase beta subunit (804 aa).

One can recognise a tRNA-binding domain in the interval 40–153 (PLPDLRVVVG…SSYAVGEPFA (114 aa)). A B5 domain is found at 400 to 476 (PALLVLPFRP…RLHGYDNIEA (77 aa)). Residues aspartate 454, aspartate 460, glutamate 463, and glutamate 464 each coordinate Mg(2+). Positions 710-802 (SKFPAVQRDL…AESKLGAVIR (93 aa)) constitute an FDX-ACB domain.

It belongs to the phenylalanyl-tRNA synthetase beta subunit family. Type 1 subfamily. Tetramer of two alpha and two beta subunits. Requires Mg(2+) as cofactor.

It localises to the cytoplasm. It carries out the reaction tRNA(Phe) + L-phenylalanine + ATP = L-phenylalanyl-tRNA(Phe) + AMP + diphosphate + H(+). This Chlorobium luteolum (strain DSM 273 / BCRC 81028 / 2530) (Pelodictyon luteolum) protein is Phenylalanine--tRNA ligase beta subunit.